The chain runs to 474 residues: Adenylyl cyclase-associated protein 1 (474 aa).

Ala2 carries the N-acetylalanine modification. Position 31 is a phosphotyrosine (Tyr31). Ser34 is modified (phosphoserine). N6-acetyllysine is present on Lys80. Disordered stretches follow at residues 215–253 (ELSG…SASR) and 277–316 (MKTH…ATKK). Residues 217-227 (SGLPSGPSVGS) are compositionally biased toward low complexity. The span at 228 to 241 (GPPPPPPGPPPPPI) shows a compositional bias: pro residues. The residue at position 286 (Lys286) is an N6-methyllysine. Ser289, Ser294, and Ser300 each carry phosphoserine. The span at 299–311 (FSAPKPQTSPSPK) shows a compositional bias: pro residues. Thr306 carries the post-translational modification Phosphothreonine. 2 positions are modified to phosphoserine: Ser307 and Ser309. Positions 312–452 (PATKKEPALL…EGGDFNEFPV (141 aa)) constitute a C-CAP/cofactor C-like domain. Lys347 participates in a covalent cross-link: Glycyl lysine isopeptide (Lys-Gly) (interchain with G-Cter in SUMO1).

This sequence belongs to the CAP family. In terms of assembly, homodimer. Binds actin monomers. In terms of tissue distribution, ubiquitous.

It is found in the cell membrane. In terms of biological role, directly regulates filament dynamics and has been implicated in a number of complex developmental and morphological processes, including mRNA localization and the establishment of cell polarity. This is Adenylyl cyclase-associated protein 1 (Cap1) from Mus musculus (Mouse).